Consider the following 251-residue polypeptide: Derlin-1 (251 aa).

The residue at position 2 (S2) is an N-acetylserine. At 2-15 (SDIGDWFRSIPTIT) the chain is on the cytoplasmic side. The helical transmembrane segment at 16–31 (RYWFAATVAVPLVGKL) threads the bilayer. Topologically, residues 32 to 69 (GLISPAYFFLWPEAFLYRFQIWRPITATFYFPVGPGTG) are lumenal. Residues 70 to 89 (FLYLVNLYFLYQYSTRLETG) traverse the membrane as a helical segment. Residues 90–94 (AFDGR) lie on the Cytoplasmic side of the membrane. Residues 95–115 (PADYLFMLLFNWICIVITGLA) form a helical membrane-spanning segment. At 116 to 122 (MDMQLLM) the chain is on the lumenal side. The chain crosses the membrane as a helical span at residues 123-137 (IPLIMSVLYVWAQLN). Topologically, residues 138–154 (RDMIVSFWFGTRFKACY) are cytoplasmic. The helical transmembrane segment at 155–166 (LPWVILGFNYII) threads the bilayer. Topologically, residues 167–170 (GGSV) are lumenal. Residues 171–189 (INELIGNLVGHLYFFLMFR) form a helical membrane-spanning segment. Topologically, residues 190-251 (YPMDLGGRNF…WGQGFRLGDQ (62 aa)) are cytoplasmic. Position 201 is a phosphoserine (S201). T202 is modified (phosphothreonine). Phosphoserine is present on S226. A disordered region spans residues 229-251 (RAADQNGGGGRHNWGQGFRLGDQ). Positions 241-248 (NWGQGFRL) match the SHP-box motif.

This sequence belongs to the derlin family. In terms of assembly, homotetramer. The four subunits of the tetramer are arranged in a twofold symmetry. Forms homo- and heterooligomers with DERL2 and DERL3; binding to DERL3 is poorer than that between DERL2 and DERL3. Interacts (via SHP-box motif) with VCP. Interacts with AMFR, SELENOS, SEL1L, SELENOK and SYVN1, as well as with SEL1L-SYVN1 and VCP-SELENOS protein complexes; this interaction is weaker than that observed between DERL2 and these complexes. Interacts with NGLY1 and YOD1. Does not bind to EDEM1. Interacts with DNAJB9. Interacts with RNF103. Interacts with HM13. Interacts with XBP1 isoform 1 (via luminal/ectodomain domain); the interaction obviates the need for ectodomain shedding prior HM13/SPP-mediated XBP1 isoform 1 cleavage. Interacts with the signal recognition particle/SRP and the SRP receptor; in the process of endoplasmic reticulum stress-induced pre-emptive quality control. May interact with UBXN6. Interacts with ZFAND2B; probably through VCP. Interacts with CCDC47. Interacts with C18orf32. May interact with TRAM1. Forms a complex with SVIP and VCP/p97.

The protein resides in the endoplasmic reticulum membrane. In terms of biological role, functional component of endoplasmic reticulum-associated degradation (ERAD) for misfolded lumenal proteins. Forms homotetramers which encircle a large channel traversing the endoplasmic reticulum (ER) membrane. This allows the retrotranslocation of misfolded proteins from the ER into the cytosol where they are ubiquitinated and degraded by the proteasome. The channel has a lateral gate within the membrane which provides direct access to membrane proteins with no need to reenter the ER lumen first. May mediate the interaction between VCP and the misfolded protein. Also involved in endoplasmic reticulum stress-induced pre-emptive quality control, a mechanism that selectively attenuates the translocation of newly synthesized proteins into the endoplasmic reticulum and reroutes them to the cytosol for proteasomal degradation. By controlling the steady-state expression of the IGF1R receptor, indirectly regulates the insulin-like growth factor receptor signaling pathway. The protein is Derlin-1 of Bos taurus (Bovine).